The chain runs to 397 residues: MSGSSLPGALALSLLLVSGSLLPGPGAAQNAGFVKSPMSETKLTGDAFELYCDVVGSPTPEIQWWYAEVNRAESFRQLWDGARKRRVTVNTAYGSNGVSVLRITRLTLEDSGTYECRASNDPKRNDLRQNPSITWIRAQATISVLQKPRIVTSEEVIIRESLLPVTLQCNLTSSSHTLMYSYWTRNGVELTATRKNASNMEYRINKPRAEDSGEYHCVYHFVSAPKANATIEVKAAPDITGHKRSENKNEGQDAMMYCKSVGYPHPEWIWRKKENGVFEEISNSSGRFFITNKENYTELSIVNLQITEDPGEYECNATNSIGSASVSTVLRVRSHLAPLWPFLGILAEIIILVVIIVVYEKRKRPDEVPDDDEPAGPMKTNSTNNHKDKNLRQRNTN.

A signal peptide spans 1-28; sequence MSGSSLPGALALSLLLVSGSLLPGPGAA. Ig-like domains lie at 29 to 134, 148 to 234, and 237 to 327; these read QNAG…PSIT, PRIV…IEVK, and PDIT…ASVS. The Extracellular segment spans residues 29–338; that stretch reads QNAGFVKSPM…VLRVRSHLAP (310 aa). Cysteines 52 and 116 form a disulfide. The narpin; mediates binding with FGFR1 and has antidepressant-like activity stretch occupies residues 149–161; it reads RIVTSEEVIIRES. A disulfide bridge connects residues Cys169 and Cys217. Asn170, Asn196, Asn228, Asn283, Asn295, and Asn316 each carry an N-linked (GlcNAc...) asparagine glycan. Cys258 and Cys315 form a disulfide bridge. A helical transmembrane segment spans residues 339 to 359; it reads LWPFLGILAEIIILVVIIVVY. The Cytoplasmic segment spans residues 360-397; it reads EKRKRPDEVPDDDEPAGPMKTNSTNNHKDKNLRQRNTN. The tract at residues 364–397 is disordered; sequence RPDEVPDDDEPAGPMKTNSTNNHKDKNLRQRNTN.

Interacts with ATP2B1; this interaction stabilizes ATP2B1 and increases ATPase activity; this interaction controls T cell calcium homeostasis following T cell activation. Interacts with XKR8; promoting its localization at the cell membrane. In terms of processing, N-glycosylated. As to expression, isoform 1 and isoform 2 are widely expressed with variable levels in brain. Isoform 1 is expressed in cerebellum and midbrain. Isoform 1 and isoform 2 are expressed in cerebral cortex, hippocampus and striatum. Isoform 2 is more abundant in the cerebral cortex than isoform 1.

Its subcellular location is the cell membrane. The protein resides in the postsynaptic density. Functionally, probable homophilic and heterophilic cell adhesion molecule involved in long term potentiation at hippocampal excitatory synapses through activation of p38MAPK. May also regulate neurite outgrowth by activating the FGFR1 signaling pathway. May play a role in synaptic plasticity. Also acts as a chaperone for ATP2B1; stabilizes ATP2B1 and increases its ATPase activity. Promotes localization of XKR8 at the cell membrane. This Mus musculus (Mouse) protein is Neuroplastin (Nptn).